Reading from the N-terminus, the 372-residue chain is Flagellar P-ring protein (372 aa).

The first 26 residues, 1–26 (MNLSSLPHRLLAAAVALCAIAAPASA), serve as a signal peptide directing secretion.

The protein belongs to the FlgI family. In terms of assembly, the basal body constitutes a major portion of the flagellar organelle and consists of four rings (L,P,S, and M) mounted on a central rod.

The protein resides in the periplasm. Its subcellular location is the bacterial flagellum basal body. Its function is as follows. Assembles around the rod to form the L-ring and probably protects the motor/basal body from shearing forces during rotation. This chain is Flagellar P-ring protein, found in Xanthomonas campestris pv. campestris (strain ATCC 33913 / DSM 3586 / NCPPB 528 / LMG 568 / P 25).